The primary structure comprises 377 residues: Nitric oxide reductase FlRd-NAD(+) reductase (377 aa).

It belongs to the FAD-dependent oxidoreductase family. FAD serves as cofactor.

The protein resides in the cytoplasm. The catalysed reaction is 2 reduced [nitric oxide reductase rubredoxin domain] + NAD(+) + H(+) = 2 oxidized [nitric oxide reductase rubredoxin domain] + NADH. The protein operates within nitrogen metabolism; nitric oxide reduction. One of at least two accessory proteins for anaerobic nitric oxide (NO) reductase. Reduces the rubredoxin moiety of NO reductase. The polypeptide is Nitric oxide reductase FlRd-NAD(+) reductase (Shigella flexneri serotype 5b (strain 8401)).